Here is a 386-residue protein sequence, read N- to C-terminus: Skeletal aspartic acid-rich protein 1 (386 aa).

Positions 1-24 (MAFVSCFHLRLLFLCLALFMAAEC) are cleaved as a signal peptide. Disordered regions lie at residues 33-145 (VDSD…PFSL) and 244-291 (EVTD…DCPH). The span at 63–107 (YDASDDNDNDNDDDDNNDNDNDNDDDNDVDRDNDNDDDDFDDSND) shows a compositional bias: acidic residues. 2 stretches are compositionally biased toward basic and acidic residues: residues 133–142 (HSVESFEDRP) and 244–265 (EVTDEERKSQNKPAVCKDKDTP). The span at 266–288 (DTDSDPDDSSDNANDGDDDDDDD) shows a compositional bias: acidic residues.

Component of the acid-insoluble and acid-soluble organic matrix of the aragonitic skeleton (at protein level).

It is found in the secreted. The polypeptide is Skeletal aspartic acid-rich protein 1 (Acropora millepora (Staghorn coral)).